The chain runs to 457 residues: Peptidyl-prolyl cis-trans isomerase FKBP5 (457 aa).

M1 is subject to N-acetylmethionine. The interval 1-26 (MTTDEGAKNSGESPTATVAEQGEDIT) is disordered. S13 is modified (phosphoserine). An N6-acetyllysine modification is found at K28. The PPIase FKBP-type 1 domain maps to 50 to 138 (GDKVYVHYKG…FFEIELLDFK (89 aa)). Position 155 is an N6-acetyllysine (K155). Residues 165–251 (GATVEIHLEG…IYEVTLKSFE (87 aa)) form the PPIase FKBP-type 2 domain. TPR repeat units follow at residues 268 to 301 (AAIVKEKGTVYFKGGKYMRAVIQYGKIVSWLEME), 317 to 350 (LAAFLNLAMCYLKLREYTKAVECCDKALGLDSAN), and 351 to 384 (EKGLYRRGEAQLLMNEFESAKGDFEKVLEVNPQN). The disordered stretch occupies residues 421–457 (AKEEANKAMGKKTSEGVTNEKGTDSSAVEEEKAEGHV). The residue at position 445 (S445) is a Phosphoserine.

In terms of assembly, part of a heteromultimeric cytoplasmic complex with HSP90AA1, HSPA1A/HSPA1B and steroid receptors. Upon ligand binding dissociates from the complex and FKBP4 takes its place. Interacts with functionally mature heterooligomeric progesterone receptor complexes along with HSP90 and TEBP. Interacts with NR3C1. Interacts with Akt/AKT1 and PHLPP1; enhancing dephosphorylation and subsequent activation of Akt/AKT1. Interacts with IFI44L; this interaction modulates the kinase activity of IKBKB and IKBKE. Interacts with IKBKB and IKBKE. In terms of processing, acetylation impairs ability to promote interaction between Akt/AKT1 and PHLPP1. Deacetylation by SIRT7 promotes interaction between Akt/AKT1 and PHLPP1, leading to suppress Akt/AKT1 activation. Post-translationally, ubiquitinated, leading to degradation in a proteasome-dependent manner. Deubiquitinated by USP49, leading to stabilization.

The protein localises to the cytoplasm. It is found in the nucleus. The enzyme catalyses [protein]-peptidylproline (omega=180) = [protein]-peptidylproline (omega=0). Inhibited by both FK506 and rapamycin. Its function is as follows. Immunophilin protein with PPIase and co-chaperone activities. Component of unligated steroid receptors heterocomplexes through interaction with heat-shock protein 90 (HSP90). Plays a role in the intracellular trafficking of heterooligomeric forms of steroid hormone receptors maintaining the complex into the cytoplasm when unliganded. Acts as a regulator of Akt/AKT1 activity by promoting the interaction between Akt/AKT1 and PHLPP1, thereby enhancing dephosphorylation and subsequent activation of Akt/AKT1. Interacts with IKBKE and IKBKB which facilitates IKK complex assembly leading to increased IKBKE and IKBKB kinase activity, NF-kappaB activation, and IFN production. This Chlorocebus aethiops (Green monkey) protein is Peptidyl-prolyl cis-trans isomerase FKBP5 (FKBP5).